Reading from the N-terminus, the 283-residue chain is 2-hydroxy-6-oxononadienedioate/2-hydroxy-6-oxononatrienedioate hydrolase (283 aa).

Residues 35 to 269 (VVVMFHGSGP…KCGHWAQWEH (235 aa)) enclose the AB hydrolase-1 domain. Catalysis depends on H263, which acts as the Proton acceptor.

The protein belongs to the AB hydrolase superfamily. MhpC family. Homodimer.

It catalyses the reaction (2Z,4E)-2-hydroxy-6-oxonona-2,4-dienedioate + H2O = (2Z)-2-hydroxypenta-2,4-dienoate + succinate + H(+). The enzyme catalyses (2Z,4E,7E)-2-hydroxy-6-oxonona-2,4,7-trienedioate + H2O = (2Z)-2-hydroxypenta-2,4-dienoate + fumarate + H(+). It functions in the pathway aromatic compound metabolism; 3-phenylpropanoate degradation. Catalyzes the cleavage of the C5-C6 bond of 2-hydroxy-6-oxononadienedioate and 2-hydroxy-6-oxononatrienedioate, a dienol ring fission product of the bacterial meta-cleavage pathway for degradation of phenylpropionic acid. In Pseudomonas sp, this protein is 2-hydroxy-6-oxononadienedioate/2-hydroxy-6-oxononatrienedioate hydrolase.